A 1079-amino-acid chain; its full sequence is Electrogenic sodium bicarbonate cotransporter 1 (1079 aa).

Positions 1–62 are required for interaction with AHCYL1; that stretch reads MEDEAVLDRG…EKKEKERISE (62 aa). The Cytoplasmic portion of the chain corresponds to 1–466; the sequence is MEDEAVLDRG…FASDFYDALN (466 aa). E21 bears the Phosphoserine mark. Residue Y30 is modified to Phosphotyrosine. Positions 39-52 are enriched in basic residues; it reads YRRRRRHKRKAGHK. A disordered region spans residues 39-78; the sequence is YRRRRRHKRKAGHKEKKEKERISENYSDKSDVENADESSS. Residues 53–70 are compositionally biased toward basic and acidic residues; sequence EKKEKERISENYSDKSDV. Phosphoserine is present on residues S61, S65, S68, S223, S232, S233, and S245. Positions 235-266 are disordered; that stretch reads SRMFSNPDNGSPAMTHRNLTSSSLNDISDKPE. Phosphothreonine occurs at positions 249 and 254. Residues 251 to 260 show a composition bias toward polar residues; that stretch reads RNLTSSSLND. Phosphoserine is present on residues S256, S257, and S262. The chain crosses the membrane as a helical span at residues 467–491; that stretch reads IQALSAILFIYLATVTNAITFGGLL. Residues 492–501 are Extracellular-facing; it reads GDATDNMQGV. A helical membrane pass occupies residues 502-520; that stretch reads LESFLGTAVSGAIFCLFAG. Q521 is a topological domain (cytoplasmic). The discontinuously helical transmembrane segment at 522–542 threads the bilayer; the sequence is PLTILSSTGPVLVFERLLFNF. Over 543–550 the chain is Extracellular; sequence SKDHNFDY. A helical membrane pass occupies residues 551–571; sequence LEFRLWIGLWSAFMCLVLVAT. At 572–585 the chain is on the cytoplasmic side; sequence DASFLVQYFTRFTE. The chain crosses the membrane as a helical span at residues 586–609; the sequence is EGFSSLISFIFIYDAFKKMIKLAD. The Extracellular portion of the chain corresponds to 610–692; the sequence is YYPINSDFKV…GNNCDFVPDI (83 aa). Residues 693–710 form a helical membrane-spanning segment; sequence TLMSFILFLGTYTSSMAM. At 711-725 the chain is on the cytoplasmic side; it reads KKFKTSRYFPTTARK. A helical transmembrane segment spans residues 726–745; that stretch reads LISDFAIILSILIFCVIDAL. Residues 746 to 779 lie on the Extracellular side of the membrane; it reads VGVDTPKLIVPSEFKPTSPNRGWFVPPFGGNPWW. The segment at 748–779 is interaction with CA4; it reads VDTPKLIVPSEFKPTSPNRGWFVPPFGGNPWW. A helical membrane pass occupies residues 780 to 807; that stretch reads VCLAAAIPALLVTILIFMDQQITAVIVN. The Cytoplasmic portion of the chain corresponds to 808–819; it reads RKEHKLKKGAGY. The chain crosses the membrane as a helical span at residues 820 to 836; that stretch reads HLDLFWVAILMVVCSFM. A837 is a topological domain (extracellular). A discontinuously helical membrane pass occupies residues 838–855; sequence LPWYVAATVISIAHIDSL. Over 856–877 the chain is Cytoplasmic; sequence KMETETSAPGEQPKFLGVREQR. The chain crosses the membrane as a helical span at residues 878–894; it reads VTGTLVFILTGLSVFMA. At 895–901 the chain is on the extracellular side; it reads PILKFIP. The chain crosses the membrane as a helical span at residues 902–918; sequence MPVLYGVFLYMGVASLN. Residues 919–960 are Cytoplasmic-facing; the sequence is GVQFMDRLKLLLMPLKHQPDFIYLRHVPLRRVHLFTFLQVLC. An intramembrane region (discontinuously helical) is located at residues 961–986; the sequence is LALLWILKSTVAAIIFPVMILALVAV. At 987–1079 the chain is on the cytoplasmic side; it reads RKGMDYLFSQ…STFLERHTSC (93 aa). The CA2-binding stretch occupies residues 1002–1004; that stretch reads LDD. The disordered stretch occupies residues 1012 to 1079; the sequence is KKKEDEKKKK…STFLERHTSC (68 aa). Residues S1026 and S1029 each carry the phosphoserine modification. A CA2-binding region spans residues 1030 to 1033; the sequence is DNDD. Residues S1034 and S1044 each carry the phosphoserine modification. Residues 1057-1059 are required for basolateral targeting; sequence FLS. A compositionally biased stretch (basic and acidic residues) spans 1062–1079; it reads KPLDRERSSTFLERHTSC. Phosphoserine is present on S1069.

This sequence belongs to the anion exchanger (TC 2.A.31) family. Homodimer. Interacts with CA2/carbonic anhydrase 2 and CA4/carbonic anhydrase 4 which may regulate transporter activity. Isoform 1 but not isoform 2 interacts with AHCYL1 (via PEST domain when phosphorylated); the interaction increases SLC4A4 isoform 1 activity. Interacts with AHCYL2. In terms of processing, phosphorylation of Ser-1026 by PKA increases the binding of CA2 and changes the Na(+):HCO3(-) stoichiometry of the transporter from 3:1 to 2:1. Phosphorylated in presence of STK39 and dephosphorylated in presence of PP1 phosphatase; phosphorylation seems to inhibit SLC4A4 activity. Post-translationally, N-glycosylated. May not be necessary for the transporter basic functions. In terms of tissue distribution, isoform 1 is specifically expressed in pancreatic ducts and acini. Also expressed in parotid acinar cells and in the colonic crypts.

It localises to the basolateral cell membrane. Its subcellular location is the cell membrane. It carries out the reaction 2 hydrogencarbonate(out) + Na(+)(out) = 2 hydrogencarbonate(in) + Na(+)(in). The enzyme catalyses 3 hydrogencarbonate(out) + Na(+)(out) = 3 hydrogencarbonate(in) + Na(+)(in). With respect to regulation, activated by cyclic AMP. Functionally, electrogenic sodium/bicarbonate cotransporter with a Na(+):HCO3(-) stoichiometry varying from 1:2 to 1:3. May regulate bicarbonate influx/efflux at the basolateral membrane of cells and regulate intracellular pH. This is Electrogenic sodium bicarbonate cotransporter 1 (Slc4a4) from Mus musculus (Mouse).